The chain runs to 232 residues: MILAANFKTNHTRKSTRHYLERLSNFLFETSCEHDIFLFPPPLALDFFDDIGGVCIGTQNAYPAPSGAFTGEVGSEQLEELAIQTILIGHSERRGILGESQAFCAEKFRYYASLGYTIFYCIGESLEVRRAGIEATIRHNLSQLEGIDLSYPKLIIAYEPIWAIGTGVSASLEQIQETHAALKAHLSCPLLYGGSVNLSNIAEILALPEVDGALIGSASLKVEDFCQMIQKI.

Asn6–Lys8 contacts substrate. The active-site Electrophile is His90. The Proton acceptor role is filled by Glu159. Substrate contacts are provided by Gly165 and Ser195.

The protein belongs to the triosephosphate isomerase family. As to quaternary structure, homodimer.

Its subcellular location is the cytoplasm. It catalyses the reaction D-glyceraldehyde 3-phosphate = dihydroxyacetone phosphate. It functions in the pathway carbohydrate biosynthesis; gluconeogenesis. It participates in carbohydrate degradation; glycolysis; D-glyceraldehyde 3-phosphate from glycerone phosphate: step 1/1. Functionally, involved in the gluconeogenesis. Catalyzes stereospecifically the conversion of dihydroxyacetone phosphate (DHAP) to D-glyceraldehyde-3-phosphate (G3P). This is Triosephosphate isomerase from Wolinella succinogenes (strain ATCC 29543 / DSM 1740 / CCUG 13145 / JCM 31913 / LMG 7466 / NCTC 11488 / FDC 602W) (Vibrio succinogenes).